Reading from the N-terminus, the 158-residue chain is NAD(P)H-quinone oxidoreductase subunit N (158 aa).

Belongs to the complex I NdhN subunit family. In terms of assembly, NDH-1 can be composed of about 15 different subunits; different subcomplexes with different compositions have been identified which probably have different functions.

Its subcellular location is the cellular thylakoid membrane. The catalysed reaction is a plastoquinone + NADH + (n+1) H(+)(in) = a plastoquinol + NAD(+) + n H(+)(out). It catalyses the reaction a plastoquinone + NADPH + (n+1) H(+)(in) = a plastoquinol + NADP(+) + n H(+)(out). Functionally, NDH-1 shuttles electrons from an unknown electron donor, via FMN and iron-sulfur (Fe-S) centers, to quinones in the respiratory and/or the photosynthetic chain. The immediate electron acceptor for the enzyme in this species is believed to be plastoquinone. Couples the redox reaction to proton translocation, and thus conserves the redox energy in a proton gradient. Cyanobacterial NDH-1 also plays a role in inorganic carbon-concentration. In Prochlorococcus marinus (strain AS9601), this protein is NAD(P)H-quinone oxidoreductase subunit N.